We begin with the raw amino-acid sequence, 233 residues long: Ubiquitin carboxyl-terminal hydrolase isozyme L4 (233 aa).

Residues 5–232 (RWLPLEANPE…LRFNAIALSA (228 aa)) form the UCH catalytic domain. The segment at 8–13 (PLEANP) is interaction with ubiquitin. The Nucleophile role is filled by cysteine 95. Serine 133 bears the Phosphoserine mark. Residue histidine 172 is the Proton donor of the active site. The segment at 222-227 (ELRFNA) is interaction with ubiquitin.

Belongs to the peptidase C12 family. In terms of tissue distribution, expressed in various tissues at low level.

The protein localises to the cytoplasm. The catalysed reaction is Thiol-dependent hydrolysis of ester, thioester, amide, peptide and isopeptide bonds formed by the C-terminal Gly of ubiquitin (a 76-residue protein attached to proteins as an intracellular targeting signal).. In terms of biological role, ubiquitin-protein hydrolase is involved both in the processing of ubiquitin precursors and of ubiquitinated proteins. This enzyme is a thiol protease that recognizes and hydrolyzes a peptide bond at the C-terminal glycine of ubiquitin. The protein is Ubiquitin carboxyl-terminal hydrolase isozyme L4 (Uchl4) of Mus musculus (Mouse).